The following is a 325-amino-acid chain: L-lactate dehydrogenase 1 (325 aa).

Residues V17, D38, K43, Y68, and 82 to 83 (GA) each bind NAD(+). Substrate contacts are provided by residues Q85, R91, and 123 to 126 (NPVD). NAD(+) is bound by residues 121–123 (AAN) and S146. Residue 151–154 (DTAR) participates in substrate binding. The beta-D-fructose 1,6-bisphosphate site is built by R156 and H171. H178 (proton acceptor) is an active-site residue. Position 223 is a phosphotyrosine (Y223). T232 is a binding site for substrate.

The protein belongs to the LDH/MDH superfamily. LDH family. As to quaternary structure, homotetramer.

It is found in the cytoplasm. It catalyses the reaction (S)-lactate + NAD(+) = pyruvate + NADH + H(+). The protein operates within fermentation; pyruvate fermentation to lactate; (S)-lactate from pyruvate: step 1/1. With respect to regulation, allosterically activated by fructose 1,6-bisphosphate (FBP). Functionally, catalyzes the conversion of lactate to pyruvate. The polypeptide is L-lactate dehydrogenase 1 (Lactococcus lactis subsp. lactis (strain IL1403) (Streptococcus lactis)).